We begin with the raw amino-acid sequence, 264 residues long: Thymidylate synthase (264 aa).

DUMP is bound at residue Arg21. His51 contributes to the (6R)-5,10-methylene-5,6,7,8-tetrahydrofolate binding site. Residue 126–127 coordinates dUMP; sequence RR. The active-site Nucleophile is Cys146. DUMP is bound by residues 166-169, Asn177, and 207-209; these read RSCD and HLY. (6R)-5,10-methylene-5,6,7,8-tetrahydrofolate is bound at residue Asp169. (6R)-5,10-methylene-5,6,7,8-tetrahydrofolate is bound at residue Ala263.

It belongs to the thymidylate synthase family. Bacterial-type ThyA subfamily. As to quaternary structure, homodimer.

The protein localises to the cytoplasm. The enzyme catalyses dUMP + (6R)-5,10-methylene-5,6,7,8-tetrahydrofolate = 7,8-dihydrofolate + dTMP. It functions in the pathway pyrimidine metabolism; dTTP biosynthesis. Catalyzes the reductive methylation of 2'-deoxyuridine-5'-monophosphate (dUMP) to 2'-deoxythymidine-5'-monophosphate (dTMP) while utilizing 5,10-methylenetetrahydrofolate (mTHF) as the methyl donor and reductant in the reaction, yielding dihydrofolate (DHF) as a by-product. This enzymatic reaction provides an intracellular de novo source of dTMP, an essential precursor for DNA biosynthesis. In Enterobacter sp. (strain 638), this protein is Thymidylate synthase.